Reading from the N-terminus, the 855-residue chain is Leucine--tRNA ligase (855 aa).

Positions 45-55 (PYPSGRLHMGH) match the 'HIGH' region motif. The short motif at 619 to 623 (KMSKS) is the 'KMSKS' region element. An ATP-binding site is contributed by K622.

This sequence belongs to the class-I aminoacyl-tRNA synthetase family.

It localises to the cytoplasm. It catalyses the reaction tRNA(Leu) + L-leucine + ATP = L-leucyl-tRNA(Leu) + AMP + diphosphate. The sequence is that of Leucine--tRNA ligase from Hyphomonas neptunium (strain ATCC 15444).